The chain runs to 288 residues: 4-hydroxy-3-methylbut-2-enyl diphosphate reductase (288 aa).

C12 is a [4Fe-4S] cluster binding site. Residues H42 and H77 each coordinate (2E)-4-hydroxy-3-methylbut-2-enyl diphosphate. Dimethylallyl diphosphate is bound by residues H42 and H77. Positions 42 and 77 each coordinate isopentenyl diphosphate. C99 is a [4Fe-4S] cluster binding site. (2E)-4-hydroxy-3-methylbut-2-enyl diphosphate is bound at residue H127. H127 serves as a coordination point for dimethylallyl diphosphate. Residue H127 participates in isopentenyl diphosphate binding. E129 acts as the Proton donor in catalysis. A (2E)-4-hydroxy-3-methylbut-2-enyl diphosphate-binding site is contributed by T165. C193 serves as a coordination point for [4Fe-4S] cluster. (2E)-4-hydroxy-3-methylbut-2-enyl diphosphate-binding residues include S221, S222, N223, and S265. Dimethylallyl diphosphate-binding residues include S221, S222, N223, and S265. Isopentenyl diphosphate contacts are provided by S221, S222, N223, and S265.

This sequence belongs to the IspH family. The cofactor is [4Fe-4S] cluster.

It carries out the reaction isopentenyl diphosphate + 2 oxidized [2Fe-2S]-[ferredoxin] + H2O = (2E)-4-hydroxy-3-methylbut-2-enyl diphosphate + 2 reduced [2Fe-2S]-[ferredoxin] + 2 H(+). The catalysed reaction is dimethylallyl diphosphate + 2 oxidized [2Fe-2S]-[ferredoxin] + H2O = (2E)-4-hydroxy-3-methylbut-2-enyl diphosphate + 2 reduced [2Fe-2S]-[ferredoxin] + 2 H(+). It functions in the pathway isoprenoid biosynthesis; dimethylallyl diphosphate biosynthesis; dimethylallyl diphosphate from (2E)-4-hydroxy-3-methylbutenyl diphosphate: step 1/1. It participates in isoprenoid biosynthesis; isopentenyl diphosphate biosynthesis via DXP pathway; isopentenyl diphosphate from 1-deoxy-D-xylulose 5-phosphate: step 6/6. Its function is as follows. Catalyzes the conversion of 1-hydroxy-2-methyl-2-(E)-butenyl 4-diphosphate (HMBPP) into a mixture of isopentenyl diphosphate (IPP) and dimethylallyl diphosphate (DMAPP). Acts in the terminal step of the DOXP/MEP pathway for isoprenoid precursor biosynthesis. The polypeptide is 4-hydroxy-3-methylbut-2-enyl diphosphate reductase (Caldanaerobacter subterraneus subsp. tengcongensis (strain DSM 15242 / JCM 11007 / NBRC 100824 / MB4) (Thermoanaerobacter tengcongensis)).